The primary structure comprises 359 residues: MTSAATLNADSPQPVEQRTDVLVVGAGPVGLFAAFQAGVLGMSCVLVDALDRPGGQCTELYPEKPIYDIPALVSCTAQELVDRLMAQCAPFNYPILCGRRAETVETLENEHGRRFRVTTSAGDVFDCAAVLITAGNGAFTPQRVALPEAAALEGRHLHYAVRDTARFTGKRVVIAGGGDSALDWALALRKVAARVTLVHRREGFRAADASVAEMRAAVVAGEMDFVLGMLSRLDSTPDGTLIGAAIRGRDGETVLPCDELIALYGLVSEPGPIVNWGVEMRAGRITVETTAYETSRPGVFAAGDIALYPNKQKLILSGFHEVAMALRRAYRYANPDKTLVHTHSSNDAGLQTKLHVTAE.

FAD-binding residues include Asp48, Gln56, Tyr61, Ala101, Phe139, Asp304, and Ser345.

It belongs to the ferredoxin--NADP reductase type 2 family. In terms of assembly, homodimer. The cofactor is FAD.

It carries out the reaction 2 reduced [2Fe-2S]-[ferredoxin] + NADP(+) + H(+) = 2 oxidized [2Fe-2S]-[ferredoxin] + NADPH. This chain is Ferredoxin--NADP reductase, found in Ralstonia pickettii (strain 12J).